The sequence spans 367 residues: Alanine racemase (367 aa).

Lys40 functions as the Proton acceptor; specific for D-alanine in the catalytic mechanism. Lys40 bears the N6-(pyridoxal phosphate)lysine mark. Arg136 provides a ligand contact to substrate. The active-site Proton acceptor; specific for L-alanine is the Tyr263. Met310 is a binding site for substrate.

Belongs to the alanine racemase family. Pyridoxal 5'-phosphate serves as cofactor.

The enzyme catalyses L-alanine = D-alanine. It participates in amino-acid biosynthesis; D-alanine biosynthesis; D-alanine from L-alanine: step 1/1. Its function is as follows. Catalyzes the interconversion of L-alanine and D-alanine. May also act on other amino acids. The chain is Alanine racemase (alr) from Streptococcus pneumoniae (strain 70585).